The sequence spans 536 residues: Probable cytochrome P450 12a5, mitochondrial (536 aa).

Residue Cys482 participates in heme binding.

This sequence belongs to the cytochrome P450 family. Heme is required as a cofactor.

The protein resides in the mitochondrion membrane. The sequence is that of Probable cytochrome P450 12a5, mitochondrial (Cyp12a5) from Drosophila melanogaster (Fruit fly).